The chain runs to 356 residues: MQTRKIVRAAAVQAASPNYDLATGVDKTIELARQARDEGCDLIVFGETWLPGYPFHVWLGAPAWSLKYSARYYANSLSLDSAEFQRIAQAARTLGIFIALGYSERSGGSLYLGQCLIDDKGQMLWSRRKLKPTHVERTVFGEGYARDLIVSDTELGRVGALCCWEHLSPLSKYALYSQHEAIHIAAWPSFSLYSEQAHALSAKVNMAASQIYSVEGQCFTIAASSVVTQETLDMLEVGEHNASLLKVGGGSSMIFAPDGRTLAPYLPHDAEGLIIADLNMEEIAFAKAINDPVGHYSKPEATRLVLDLGHREPMTRVHSKSVIQEEAPEPHVQSTAAPVAVSQTQDSDTLLVQEPS.

Residues 7–280 (VRAAAVQAAS…EGLIIADLNM (274 aa)) form the CN hydrolase domain. The active-site Proton acceptor is glutamate 47. Residue lysine 129 is the Proton donor of the active site. The Nucleophile role is filled by cysteine 163. Residues 324–356 (QEEAPEPHVQSTAAPVAVSQTQDSDTLLVQEPS) form a disordered region. The span at 332-356 (VQSTAAPVAVSQTQDSDTLLVQEPS) shows a compositional bias: polar residues.

This sequence belongs to the carbon-nitrogen hydrolase superfamily. Nitrilase family. In terms of assembly, homohexamer.

It catalyses the reaction a nitrile + 2 H2O = a carboxylate + NH4(+). Nitrilase that acts mostly on arylacetonitriles. The protein is Nitrilase, arylacetone-specific of Alcaligenes faecalis.